A 60-amino-acid polypeptide reads, in one-letter code: Large ribosomal subunit protein uL30 (60 aa).

The protein belongs to the universal ribosomal protein uL30 family. Part of the 50S ribosomal subunit.

The protein is Large ribosomal subunit protein uL30 of Paraburkholderia phytofirmans (strain DSM 17436 / LMG 22146 / PsJN) (Burkholderia phytofirmans).